The sequence spans 177 residues: Negative modulator of initiation of replication (177 aa).

It belongs to the SeqA family. In terms of assembly, homodimer. Polymerizes to form helical filaments.

It is found in the cytoplasm. Its function is as follows. Negative regulator of replication initiation, which contributes to regulation of DNA replication and ensures that replication initiation occurs exactly once per chromosome per cell cycle. Binds to pairs of hemimethylated GATC sequences in the oriC region, thus preventing assembly of replication proteins and re-initiation at newly replicated origins. Repression is relieved when the region becomes fully methylated. The polypeptide is Negative modulator of initiation of replication (Vibrio cholerae serotype O1 (strain ATCC 39315 / El Tor Inaba N16961)).